We begin with the raw amino-acid sequence, 535 residues long: Probable galacturonosyltransferase 12 (535 aa).

The Cytoplasmic portion of the chain corresponds to 1 to 37 (MQLHISPSLRHVTVVTGKGLREFIKVKVGSRRFSYQM). A helical; Signal-anchor for type II membrane protein transmembrane segment spans residues 38–58 (VFYSLLFFTFLLRFVFVLSTV). The Lumenal portion of the chain corresponds to 59–535 (DTIDGDPSPC…FIKSCHIRAS (477 aa)). N-linked (GlcNAc...) asparagine glycosylation is found at N397 and N430.

Belongs to the glycosyltransferase 8 family. In terms of tissue distribution, highly expressed in stems. Detected in roots, inflorescences, siliques, and leaves. Expressed in cells undergoing secondary wall thickening, including interfascicular fibers and primary and secondary xylem.

The protein localises to the golgi apparatus membrane. The protein operates within glycan metabolism; pectin biosynthesis. Involved in pectin assembly and/or distribution, and in the synthesis of secondary wall glucuronoxylan. Probably involved in the synthesis of the glycosyl sequence at the glucuronoxylan reducing end. May be involved in synthesis of a complex glycan primer for xylan synthesis. The sequence is that of Probable galacturonosyltransferase 12 (GAUT12) from Arabidopsis thaliana (Mouse-ear cress).